We begin with the raw amino-acid sequence, 650 residues long: MDLCQVFLTLALAVTSSTFSGSEATPATLGKASPVLQRINPSLGTSSSGKPRFTKCRSPELETFSCYWTEGDNPDLKTPGSIQLYYAKRESQRQAARIAHEWTQEWKECPDYVSAGKNSCYFNSSYTSIWIPYCIKLTTNGDLLDQKCFTVDEIVQPDPPIGLNWTLLNISLTGIRGDIQVSWQPPPNADVLKGWIILEYEIQYKEVNESKWKVMGPIWLTYCPVYSLRMDKEHEVRVRSRQRSFEKYSEFSEVLRVIFPQTNILEACEEDIQFPWFLIIIFGIFGVAVMLFVVIFSKQQRIKMLILPPVPVPKIKGIDPDLLKEGKLEEVNTILGIHDNYKPDFYNDDSWVEFIELDIDEADVDEKTEGSDTDRLLSNDHEKSAGILGAKDDDSGRTSCYDPDILDTDFHTSDMCDGTLKFRQSQKLNMEADLLCLDQKNLKNLPYDASLGSLHPSITQTVEENKPQPLLSSETEATHQLASTPMSNPTSLANIDFYAQVSDITPAGGDVLSPGQKIKAGIAQGNTQREVATPCQENYSMNSAYFCESDAKKCIAVARRMEATSCIKPSFNQEDIYITTESLTTTAQMSETADIAPDAEMSVPDYTTVHTVQSPRGLILNATALPLPDKKNFPSSCGYVSTDQLNKIMQ.

The signal sequence occupies residues 1-24 (MDLCQVFLTLALAVTSSTFSGSEA). Residues 25–273 (TPATLGKASP…ILEACEEDIQ (249 aa)) are Extracellular-facing. 2 disulfide bridges follow: cysteine 56/cysteine 66 and cysteine 109/cysteine 120. Asparagine 123 is a glycosylation site (N-linked (GlcNAc...) asparagine). A disulfide bond links cysteine 134 and cysteine 148. One can recognise a Fibronectin type-III domain in the interval 159 to 262 (PPIGLNWTLL…EVLRVIFPQT (104 aa)). N-linked (GlcNAc...) asparagine glycans are attached at residues asparagine 164, asparagine 169, and asparagine 208. Positions 248–252 (YSEFS) match the WSXWS motif motif. Residues 274 to 297 (FPWFLIIIFGIFGVAVMLFVVIFS) traverse the membrane as a helical segment. Topologically, residues 298 to 650 (KQQRIKMLIL…STDQLNKIMQ (353 aa)) are cytoplasmic. The interval 303-390 (KMLILPPVPV…HEKSAGILGA (88 aa)) is required for JAK2 binding. Positions 306–314 (ILPPVPVPK) match the Box 1 motif motif. The UbE motif motif lies at 349–358 (DSWVEFIELD). Serine 350 bears the Phosphoserine mark. The disordered stretch occupies residues 466 to 486 (KPQPLLSSETEATHQLASTPM). The segment covering 470–486 (LLSSETEATHQLASTPM) has biased composition (polar residues). A phosphotyrosine mark is found at tyrosine 498 and tyrosine 606.

It belongs to the type I cytokine receptor family. Type 1 subfamily. On growth hormone (GH) binding, forms homodimers and binds JAK2 via a box 1-containing domain. In terms of processing, the soluble form (GHBP) is produced by phorbol ester-promoted proteolytic cleavage at the cell surface (shedding) by ADAM17/TACE. Shedding is inhibited by growth hormone (GH) binding to the receptor probably due to a conformational change in GHR rendering the receptor inaccessible to ADAM17. On GH binding, phosphorylated on tyrosine residues in the cytoplasmic domain by JAK2. Post-translationally, ubiquitinated by the ECS(SOCS2) complex following ligand-binding and phosphorylation by JAK2, leading to its degradation by the proteasome. Regulation by the ECS(SOCS2) complex acts as a negative feedback loop of growth hormone receptor signaling. Ubiquitination is not sufficient for GHR internalization. In terms of tissue distribution, expressed in all tissues tested including, liver, heart, adipose tissue, mammary gland, testes, ovary, brain, kidney and muscle. Highest levels in liver.

It localises to the cell membrane. The protein localises to the secreted. Its function is as follows. Receptor for pituitary gland growth hormone (GH1) involved in regulating postnatal body growth. On ligand binding, couples to the JAK2/STAT5 pathway. The soluble form (GHBP) acts as a reservoir of growth hormone in plasma and may be a modulator/inhibitor of GH signaling. This chain is Growth hormone receptor (Ghr), found in Mus musculus (Mouse).